The chain runs to 287 residues: ATP synthase gamma chain (287 aa).

Belongs to the ATPase gamma chain family. As to quaternary structure, F-type ATPases have 2 components, CF(1) - the catalytic core - and CF(0) - the membrane proton channel. CF(1) has five subunits: alpha(3), beta(3), gamma(1), delta(1), epsilon(1). CF(0) has three main subunits: a, b and c.

The protein localises to the cell inner membrane. Produces ATP from ADP in the presence of a proton gradient across the membrane. The gamma chain is believed to be important in regulating ATPase activity and the flow of protons through the CF(0) complex. This is ATP synthase gamma chain from Yersinia pestis.